The sequence spans 126 residues: MNNILAIALGAAIGANLRYGIGLWAAQRFGTAWPYGTFIINLLGCLGIGLLLTLISTRLTLSEPVRLMLVTGLLGGFTTFSTFGYESFSLLSSGNWLPAIGYMVGSVVGGLIAVIIGVGLGRWFGG.

A run of 4 helical transmembrane segments spans residues 4 to 24 (ILAI…IGLW), 35 to 55 (YGTF…LTLI), 68 to 88 (MLVT…YESF), and 100 to 120 (IGYM…GVGL). 2 residues coordinate Na(+): G75 and T78.

The protein belongs to the fluoride channel Fluc/FEX (TC 1.A.43) family.

The protein localises to the cell membrane. It catalyses the reaction fluoride(in) = fluoride(out). Its activity is regulated as follows. Na(+) is not transported, but it plays an essential structural role and its presence is essential for fluoride channel function. Fluoride-specific ion channel. Important for reducing fluoride concentration in the cell, thus reducing its toxicity. The sequence is that of Fluoride-specific ion channel FluC from Chloroflexus aurantiacus (strain ATCC 29366 / DSM 635 / J-10-fl).